Consider the following 485-residue polypeptide: Serine hydroxymethyltransferase, mitochondrial (485 aa).

Lys259 bears the N6-(pyridoxal phosphate)lysine mark.

The protein belongs to the SHMT family. As to quaternary structure, homotetramer. It depends on pyridoxal 5'-phosphate as a cofactor.

It localises to the mitochondrion. The enzyme catalyses (6R)-5,10-methylene-5,6,7,8-tetrahydrofolate + glycine + H2O = (6S)-5,6,7,8-tetrahydrofolate + L-serine. Its pathway is one-carbon metabolism; tetrahydrofolate interconversion. Functionally, interconversion of serine and glycine. The polypeptide is Serine hydroxymethyltransferase, mitochondrial (SHM1) (Candida glabrata (strain ATCC 2001 / BCRC 20586 / JCM 3761 / NBRC 0622 / NRRL Y-65 / CBS 138) (Yeast)).